A 45-amino-acid chain; its full sequence is Large ribosomal subunit protein bL34 (45 aa).

The protein belongs to the bacterial ribosomal protein bL34 family.

This is Large ribosomal subunit protein bL34 from Salinispora arenicola (strain CNS-205).